A 380-amino-acid chain; its full sequence is Queuine tRNA-ribosyltransferase (380 aa).

The Proton acceptor role is filled by D93. Substrate contacts are provided by residues D93–F97, D147, Q198, and G225. The RNA binding stretch occupies residues G256–N262. The active-site Nucleophile is D275. The RNA binding; important for wobble base 34 recognition stretch occupies residues A280–R284. C313, C315, C318, and H344 together coordinate Zn(2+).

The protein belongs to the queuine tRNA-ribosyltransferase family. In terms of assembly, homodimer. Within each dimer, one monomer is responsible for RNA recognition and catalysis, while the other monomer binds to the replacement base PreQ1. The cofactor is Zn(2+).

The enzyme catalyses 7-aminomethyl-7-carbaguanine + guanosine(34) in tRNA = 7-aminomethyl-7-carbaguanosine(34) in tRNA + guanine. The protein operates within tRNA modification; tRNA-queuosine biosynthesis. In terms of biological role, catalyzes the base-exchange of a guanine (G) residue with the queuine precursor 7-aminomethyl-7-deazaguanine (PreQ1) at position 34 (anticodon wobble position) in tRNAs with GU(N) anticodons (tRNA-Asp, -Asn, -His and -Tyr). Catalysis occurs through a double-displacement mechanism. The nucleophile active site attacks the C1' of nucleotide 34 to detach the guanine base from the RNA, forming a covalent enzyme-RNA intermediate. The proton acceptor active site deprotonates the incoming PreQ1, allowing a nucleophilic attack on the C1' of the ribose to form the product. After dissociation, two additional enzymatic reactions on the tRNA convert PreQ1 to queuine (Q), resulting in the hypermodified nucleoside queuosine (7-(((4,5-cis-dihydroxy-2-cyclopenten-1-yl)amino)methyl)-7-deazaguanosine). The chain is Queuine tRNA-ribosyltransferase from Clostridium perfringens (strain 13 / Type A).